Reading from the N-terminus, the 338-residue chain is Methionine import ATP-binding protein MetN 2 (338 aa).

The 241-residue stretch at 2–242 (IEIEKVCVDF…PQHAFTQQLV (241 aa)) folds into the ABC transporter domain. An ATP-binding site is contributed by 39-46 (GTSGAGKS).

The protein belongs to the ABC transporter superfamily. Methionine importer (TC 3.A.1.24) family. In terms of assembly, the complex is composed of two ATP-binding proteins (MetN), two transmembrane proteins (MetI) and a solute-binding protein (MetQ).

The protein localises to the cell inner membrane. It catalyses the reaction L-methionine(out) + ATP + H2O = L-methionine(in) + ADP + phosphate + H(+). The enzyme catalyses D-methionine(out) + ATP + H2O = D-methionine(in) + ADP + phosphate + H(+). In terms of biological role, part of the ABC transporter complex MetNIQ involved in methionine import. Responsible for energy coupling to the transport system. The chain is Methionine import ATP-binding protein MetN 2 from Salmonella choleraesuis (strain SC-B67).